A 266-amino-acid chain; its full sequence is Glucosamine-6-phosphate deaminase (266 aa).

The active-site Proton acceptor; for enolization step is the Asp-72. Asp-141 serves as the catalytic For ring-opening step. The active-site Proton acceptor; for ring-opening step is His-143. The active-site For ring-opening step is Glu-148.

Belongs to the glucosamine/galactosamine-6-phosphate isomerase family. NagB subfamily. As to quaternary structure, homohexamer.

It carries out the reaction alpha-D-glucosamine 6-phosphate + H2O = beta-D-fructose 6-phosphate + NH4(+). The protein operates within amino-sugar metabolism; N-acetylneuraminate degradation; D-fructose 6-phosphate from N-acetylneuraminate: step 5/5. With respect to regulation, allosterically activated by N-acetylglucosamine 6-phosphate (GlcNAc6P). Its function is as follows. Catalyzes the reversible isomerization-deamination of glucosamine 6-phosphate (GlcN6P) to form fructose 6-phosphate (Fru6P) and ammonium ion. The chain is Glucosamine-6-phosphate deaminase from Vibrio cholerae serotype O1 (strain ATCC 39541 / Classical Ogawa 395 / O395).